The sequence spans 348 residues: 3-isopropylmalate dehydrogenase (348 aa).

Gly76 to Glu87 is an NAD(+) binding site. Substrate contacts are provided by Arg94, Arg104, Arg132, and Asp217. Mg(2+) is bound by residues Asp217, Asp241, and Asp245. Gly275–Asn287 is a binding site for NAD(+).

It belongs to the isocitrate and isopropylmalate dehydrogenases family. LeuB type 1 subfamily. Homodimer. It depends on Mg(2+) as a cofactor. Requires Mn(2+) as cofactor.

It is found in the cytoplasm. The catalysed reaction is (2R,3S)-3-isopropylmalate + NAD(+) = 4-methyl-2-oxopentanoate + CO2 + NADH. Its pathway is amino-acid biosynthesis; L-leucine biosynthesis; L-leucine from 3-methyl-2-oxobutanoate: step 3/4. Functionally, catalyzes the oxidation of 3-carboxy-2-hydroxy-4-methylpentanoate (3-isopropylmalate) to 3-carboxy-4-methyl-2-oxopentanoate. The product decarboxylates to 4-methyl-2 oxopentanoate. The polypeptide is 3-isopropylmalate dehydrogenase (Staphylococcus aureus (strain MRSA252)).